The following is a 514-amino-acid chain: Cytochrome P450 87A3 (514 aa).

The next 2 membrane-spanning stretches (helical) occupy residues 36–56 (ASSM…VALL) and 315–335 (LMFV…TIGV). Residue C463 participates in heme binding.

This sequence belongs to the cytochrome P450 family. Heme is required as a cofactor. Expressed in roots and coleoptiles, but not in leaves.

Its subcellular location is the cytoplasmic vesicle membrane. In Oryza sativa subsp. japonica (Rice), this protein is Cytochrome P450 87A3 (CYP87A3).